Reading from the N-terminus, the 682-residue chain is DNA-directed RNA polymerase subunit beta' (682 aa).

Residues Cys-69, Cys-71, Cys-87, and Cys-90 each coordinate Zn(2+). Mg(2+) is bound by residues Asp-489, Asp-491, and Asp-493.

Belongs to the RNA polymerase beta' chain family. RpoC1 subfamily. In terms of assembly, in plastids the minimal PEP RNA polymerase catalytic core is composed of four subunits: alpha, beta, beta', and beta''. When a (nuclear-encoded) sigma factor is associated with the core the holoenzyme is formed, which can initiate transcription. It depends on Mg(2+) as a cofactor. The cofactor is Zn(2+).

Its subcellular location is the plastid. The protein resides in the chloroplast. The catalysed reaction is RNA(n) + a ribonucleoside 5'-triphosphate = RNA(n+1) + diphosphate. Functionally, DNA-dependent RNA polymerase catalyzes the transcription of DNA into RNA using the four ribonucleoside triphosphates as substrates. In Platanus occidentalis (Sycamore), this protein is DNA-directed RNA polymerase subunit beta'.